Here is a 323-residue protein sequence, read N- to C-terminus: Phosphate acetyltransferase (323 aa).

This sequence belongs to the phosphate acetyltransferase and butyryltransferase family.

The protein localises to the cytoplasm. It catalyses the reaction acetyl-CoA + phosphate = acetyl phosphate + CoA. Its pathway is metabolic intermediate biosynthesis; acetyl-CoA biosynthesis; acetyl-CoA from acetate: step 2/2. This Bacillus subtilis (strain 168) protein is Phosphate acetyltransferase (pta).